Here is a 488-residue protein sequence, read N- to C-terminus: Protein nucleotidyltransferase YdiU (488 aa).

Residues Gly-91, Gly-93, Arg-94, Lys-114, Asp-126, Gly-127, Arg-177, and Arg-184 each coordinate ATP. The active-site Proton acceptor is the Asp-253. The Mg(2+) site is built by Asn-254 and Asp-263. Asp-263 is a binding site for ATP.

It belongs to the SELO family. Requires Mg(2+) as cofactor. Mn(2+) serves as cofactor.

It carries out the reaction L-seryl-[protein] + ATP = 3-O-(5'-adenylyl)-L-seryl-[protein] + diphosphate. The catalysed reaction is L-threonyl-[protein] + ATP = 3-O-(5'-adenylyl)-L-threonyl-[protein] + diphosphate. It catalyses the reaction L-tyrosyl-[protein] + ATP = O-(5'-adenylyl)-L-tyrosyl-[protein] + diphosphate. The enzyme catalyses L-histidyl-[protein] + UTP = N(tele)-(5'-uridylyl)-L-histidyl-[protein] + diphosphate. It carries out the reaction L-seryl-[protein] + UTP = O-(5'-uridylyl)-L-seryl-[protein] + diphosphate. The catalysed reaction is L-tyrosyl-[protein] + UTP = O-(5'-uridylyl)-L-tyrosyl-[protein] + diphosphate. Nucleotidyltransferase involved in the post-translational modification of proteins. It can catalyze the addition of adenosine monophosphate (AMP) or uridine monophosphate (UMP) to a protein, resulting in modifications known as AMPylation and UMPylation. The chain is Protein nucleotidyltransferase YdiU from Bacillus mycoides (strain KBAB4) (Bacillus weihenstephanensis).